Consider the following 346-residue polypeptide: NADH-ubiquinone oxidoreductase chain 2 (346 aa).

Transmembrane regions (helical) follow at residues 1–21 (MNPHATPVLVLSLALGTTITI), 25–45 (HWVLAWTGLEINTLAIIPLIS), 60–80 (FLTQAAASALVLFSSMTNAWA), 95–115 (CLLLTAAIAIKLGLVPFHFWF), 124–144 (LMTALLLSTLMKFPPLTLLLM), 149–169 (LNPALLTTMALASAALGGWMG), 178–195 (ILAFSSISHLGWIAIILV), 200–219 (LALLTFYLYAIMTSAVFMAL), 242–262 (ATLMLVLLSLAGLPPLTGFMP), 274–294 (EMTPAAMAIAMLSLLSLFFYL), and 326–346 (AILASLSILLLPLSPMIHAIV).

Belongs to the complex I subunit 2 family.

The protein resides in the mitochondrion inner membrane. It catalyses the reaction a ubiquinone + NADH + 5 H(+)(in) = a ubiquinol + NAD(+) + 4 H(+)(out). Functionally, core subunit of the mitochondrial membrane respiratory chain NADH dehydrogenase (Complex I) that is believed to belong to the minimal assembly required for catalysis. Complex I functions in the transfer of electrons from NADH to the respiratory chain. The immediate electron acceptor for the enzyme is believed to be ubiquinone. The sequence is that of NADH-ubiquinone oxidoreductase chain 2 (MT-ND2) from Mareca falcata (Falcated duck).